The primary structure comprises 169 residues: Der GTPase-activating protein YihI (169 aa).

2 disordered regions span residues 1 to 83 (MNPL…PTKP) and 150 to 169 (DEEE…LKGN). The segment covering 21-30 (NREELNAEGR) has biased composition (basic and acidic residues). A compositionally biased stretch (basic residues) spans 31-40 (ARKREKKHRG). Composition is skewed to basic and acidic residues over residues 51 to 66 (SGDK…DPRL) and 150 to 161 (DEEEREEEKQDD).

The protein belongs to the YihI family. Interacts with Der.

A GTPase-activating protein (GAP) that modifies Der/EngA GTPase function. May play a role in ribosome biogenesis. The protein is Der GTPase-activating protein YihI of Photorhabdus laumondii subsp. laumondii (strain DSM 15139 / CIP 105565 / TT01) (Photorhabdus luminescens subsp. laumondii).